A 65-amino-acid chain; its full sequence is MSEQNICNQKDKSTLPFCQAHLCEETTNRLCVSNKAVYSLECKWAESENRVSEGRWGRGCFIGVG.

This is an uncharacterized protein from Homo sapiens (Human).